A 125-amino-acid chain; its full sequence is Large ribosomal subunit protein bL12 (125 aa).

The protein belongs to the bacterial ribosomal protein bL12 family. As to quaternary structure, homodimer. Part of the ribosomal stalk of the 50S ribosomal subunit. Forms a multimeric L10(L12)X complex, where L10 forms an elongated spine to which 2 to 4 L12 dimers bind in a sequential fashion. Binds GTP-bound translation factors.

Functionally, forms part of the ribosomal stalk which helps the ribosome interact with GTP-bound translation factors. Is thus essential for accurate translation. This is Large ribosomal subunit protein bL12 from Methylibium petroleiphilum (strain ATCC BAA-1232 / LMG 22953 / PM1).